We begin with the raw amino-acid sequence, 505 residues long: Flagellin (505 aa).

The protein belongs to the bacterial flagellin family.

It localises to the secreted. The protein resides in the bacterial flagellum. In terms of biological role, flagellin is the subunit protein which polymerizes to form the filaments of bacterial flagella. This is Flagellin (fliC) from Salmonella budapest.